We begin with the raw amino-acid sequence, 400 residues long: Formate-dependent phosphoribosylglycinamide formyltransferase (400 aa).

Residues 22–23 (EL) and Glu82 each bind N(1)-(5-phospho-beta-D-ribosyl)glycinamide. Residues Arg114, Lys155, 160–165 (SSGKGQ), 195–198 (EGFV), and Glu203 each bind ATP. One can recognise an ATP-grasp domain in the interval 119 to 308 (RLAAEELGLS…EFALHARALL (190 aa)). Positions 267 and 279 each coordinate Mg(2+). Residues Asp286, Lys356, and 363-364 (RR) contribute to the N(1)-(5-phospho-beta-D-ribosyl)glycinamide site.

It belongs to the PurK/PurT family. As to quaternary structure, homodimer.

The catalysed reaction is N(1)-(5-phospho-beta-D-ribosyl)glycinamide + formate + ATP = N(2)-formyl-N(1)-(5-phospho-beta-D-ribosyl)glycinamide + ADP + phosphate + H(+). Its pathway is purine metabolism; IMP biosynthesis via de novo pathway; N(2)-formyl-N(1)-(5-phospho-D-ribosyl)glycinamide from N(1)-(5-phospho-D-ribosyl)glycinamide (formate route): step 1/1. Its function is as follows. Involved in the de novo purine biosynthesis. Catalyzes the transfer of formate to 5-phospho-ribosyl-glycinamide (GAR), producing 5-phospho-ribosyl-N-formylglycinamide (FGAR). Formate is provided by PurU via hydrolysis of 10-formyl-tetrahydrofolate. In Hahella chejuensis (strain KCTC 2396), this protein is Formate-dependent phosphoribosylglycinamide formyltransferase.